A 975-amino-acid chain; its full sequence is Glycine dehydrogenase (decarboxylating) (975 aa).

An N6-(pyridoxal phosphate)lysine modification is found at lysine 723.

Belongs to the GcvP family. In terms of assembly, the glycine cleavage system is composed of four proteins: P, T, L and H. Requires pyridoxal 5'-phosphate as cofactor.

The enzyme catalyses N(6)-[(R)-lipoyl]-L-lysyl-[glycine-cleavage complex H protein] + glycine + H(+) = N(6)-[(R)-S(8)-aminomethyldihydrolipoyl]-L-lysyl-[glycine-cleavage complex H protein] + CO2. Functionally, the glycine cleavage system catalyzes the degradation of glycine. The P protein binds the alpha-amino group of glycine through its pyridoxal phosphate cofactor; CO(2) is released and the remaining methylamine moiety is then transferred to the lipoamide cofactor of the H protein. This Burkholderia lata (strain ATCC 17760 / DSM 23089 / LMG 22485 / NCIMB 9086 / R18194 / 383) protein is Glycine dehydrogenase (decarboxylating).